A 526-amino-acid chain; its full sequence is Chaperonin GroEL, chloroplastic (526 aa).

ATP contacts are provided by residues 29–32 (TLGP), 86–90 (DGTTT), glycine 412, 476–478 (DAA), and aspartate 492.

Belongs to the chaperonin (HSP60) family. As to quaternary structure, forms a cylinder of 14 subunits composed of two heptameric rings stacked back-to-back. Interacts with the co-chaperonin GroES.

It localises to the plastid. It is found in the chloroplast. It carries out the reaction ATP + H2O + a folded polypeptide = ADP + phosphate + an unfolded polypeptide.. In terms of biological role, together with its co-chaperonin GroES, plays an essential role in assisting protein folding. The GroEL-GroES system forms a nano-cage that allows encapsulation of the non-native substrate proteins and provides a physical environment optimized to promote and accelerate protein folding. The protein is Chaperonin GroEL, chloroplastic of Cyanidioschyzon merolae (strain NIES-3377 / 10D) (Unicellular red alga).